Consider the following 318-residue polypeptide: Putative fimbrium tip subunit Fim1F (318 aa).

The first 24 residues, 1-24 (MRFNVVLFMLIVALLGGLSTCSSE), serve as a signal peptide directing secretion. Positions 25-50 (VPIGFDTDELSFDMSLVLLTGDMQTK) are excised as a propeptide.

The protein belongs to the bacteroidetes fimbrillin superfamily. FimA/Mfa1 family. May be part of the fimbrial tip.

Its subcellular location is the fimbrium. In terms of biological role, putative component of the fimbrium tip. Fimbriae are filamentous appendages on the cell surface that mediate cell adhesion and biofilm formation. This chain is Putative fimbrium tip subunit Fim1F, found in Parabacteroides distasonis (strain ATCC 8503 / DSM 20701 / CIP 104284 / JCM 5825 / NCTC 11152).